Consider the following 147-residue polypeptide: Globin (147 aa).

Residues 1–147 enclose the Globin domain; the sequence is GLDGAQKTAL…LLTMLIKAHV (147 aa). 2 residues coordinate heme b: H66 and H98.

Belongs to the globin family. In terms of assembly, homodimer.

It is found in the cytoplasm. This chain is Globin, found in Busycotypus canaliculatus (Channeled whelk).